Reading from the N-terminus, the 86-residue chain is MKSIVFVALFGLALLAVVCSASEDAHKELLKEVVRAMVVDKTDAVQAEERKCRWYLGGCSQDGDCCKHLQCHSNYEWCVWDGTFSK.

The N-terminal stretch at 1-21 (MKSIVFVALFGLALLAVVCSA) is a signal peptide. The propeptide occupies 22 to 50 (SEDAHKELLKEVVRAMVVDKTDAVQAEER). Intrachain disulfides connect Cys52–Cys66, Cys59–Cys71, and Cys65–Cys78.

Belongs to the neurotoxin 10 (Hwtx-1) family. 17 (Hntx-9) subfamily. Expressed by the venom gland.

The protein localises to the secreted. In terms of biological role, ion channel inhibitor. The chain is Omega-theraphotoxin-Hhn1b from Cyriopagopus hainanus (Chinese bird spider).